Here is a 434-residue protein sequence, read N- to C-terminus: Adenylosuccinate synthetase (434 aa).

GTP is bound by residues 13–19 (GDEGKGK) and 41–43 (GHT). The Proton acceptor role is filled by Asp14. Residues Asp14 and Gly41 each coordinate Mg(2+). IMP is bound by residues 14–17 (DEGK), 39–42 (NAGH), Thr133, Arg147, Gln228, Thr243, and Arg307. His42 (proton donor) is an active-site residue. 303 to 309 (STTGRKR) serves as a coordination point for substrate. GTP is bound by residues Arg309, 335-337 (KID), and 417-419 (STG).

This sequence belongs to the adenylosuccinate synthetase family. In terms of assembly, homodimer. It depends on Mg(2+) as a cofactor.

Its subcellular location is the cytoplasm. The enzyme catalyses IMP + L-aspartate + GTP = N(6)-(1,2-dicarboxyethyl)-AMP + GDP + phosphate + 2 H(+). Its pathway is purine metabolism; AMP biosynthesis via de novo pathway; AMP from IMP: step 1/2. In terms of biological role, plays an important role in the de novo pathway of purine nucleotide biosynthesis. Catalyzes the first committed step in the biosynthesis of AMP from IMP. The sequence is that of Adenylosuccinate synthetase from Wigglesworthia glossinidia brevipalpis.